Reading from the N-terminus, the 191-residue chain is Adenylate kinase (191 aa).

11–16 is an ATP binding site; sequence GAGKGT. The tract at residues 31 to 60 is NMP; it reads STGDILRSNVAERSPLGIKAKDYMDKGDLV. AMP-binding positions include threonine 32, arginine 37, 58-60, 86-89, and glutamine 93; these read DLV and GFPR. An LID region spans residues 132–138; it reads SRKREDD. ATP is bound at residue arginine 133. AMP contacts are provided by arginine 135 and arginine 146. Residue asparagine 174 participates in ATP binding.

It belongs to the adenylate kinase family. As to quaternary structure, monomer.

Its subcellular location is the cytoplasm. The catalysed reaction is AMP + ATP = 2 ADP. It participates in purine metabolism; AMP biosynthesis via salvage pathway; AMP from ADP: step 1/1. Its function is as follows. Catalyzes the reversible transfer of the terminal phosphate group between ATP and AMP. Plays an important role in cellular energy homeostasis and in adenine nucleotide metabolism. The protein is Adenylate kinase of Trichodesmium erythraeum (strain IMS101).